A 141-amino-acid chain; its full sequence is Lutropin subunit beta (141 aa).

A signal peptide spans methionine 1–glycine 22. 6 cysteine pairs are disulfide-bonded: cysteine 30/cysteine 78, cysteine 44/cysteine 93, cysteine 47/cysteine 131, cysteine 55/cysteine 109, cysteine 59/cysteine 111, and cysteine 114/cysteine 121. An N-linked (GlcNAc...) asparagine glycan is attached at asparagine 34.

This sequence belongs to the glycoprotein hormones subunit beta family. In terms of assembly, heterodimer of a common alpha chain and a unique beta chain which confers biological specificity to thyrotropin, lutropin, follitropin and gonadotropin.

Its subcellular location is the secreted. Functionally, promotes spermatogenesis and ovulation by stimulating the testes and ovaries to synthesize steroids. This chain is Lutropin subunit beta (LHB), found in Trichosurus vulpecula (Brush-tailed possum).